A 389-amino-acid chain; its full sequence is Galactokinase (389 aa).

A substrate-binding site is contributed by 33-36 (EHTD). Residues Ser67 and 124–130 (GAGLSSS) contribute to the ATP site. Mg(2+)-binding residues include Ser130 and Glu162. Asp174 (proton acceptor) is an active-site residue. A substrate-binding site is contributed by Tyr224.

Belongs to the GHMP kinase family. GalK subfamily.

The protein resides in the cytoplasm. It carries out the reaction alpha-D-galactose + ATP = alpha-D-galactose 1-phosphate + ADP + H(+). The protein operates within carbohydrate metabolism; galactose metabolism. Catalyzes the transfer of the gamma-phosphate of ATP to D-galactose to form alpha-D-galactose-1-phosphate (Gal-1-P). This is Galactokinase from Fusobacterium nucleatum subsp. nucleatum (strain ATCC 25586 / DSM 15643 / BCRC 10681 / CIP 101130 / JCM 8532 / KCTC 2640 / LMG 13131 / VPI 4355).